A 959-amino-acid chain; its full sequence is Leucine--tRNA ligase (959 aa).

The short motif at 39–49 is the 'HIGH' region element; sequence PYVNAYPHLGS. Positions 637–641 match the 'KMSKS' region motif; that stretch reads KMSKS. Residue Lys640 participates in ATP binding. The tract at residues 933-959 is disordered; it reads TEEDGGSPRRANALPGRPALYAEKRGG.

It belongs to the class-I aminoacyl-tRNA synthetase family.

It localises to the cytoplasm. It carries out the reaction tRNA(Leu) + L-leucine + ATP = L-leucyl-tRNA(Leu) + AMP + diphosphate. This is Leucine--tRNA ligase from Aeropyrum pernix (strain ATCC 700893 / DSM 11879 / JCM 9820 / NBRC 100138 / K1).